Consider the following 275-residue polypeptide: 2,3,4,5-tetrahydropyridine-2,6-dicarboxylate N-succinyltransferase (275 aa).

Belongs to the transferase hexapeptide repeat family.

It is found in the cytoplasm. It catalyses the reaction (S)-2,3,4,5-tetrahydrodipicolinate + succinyl-CoA + H2O = (S)-2-succinylamino-6-oxoheptanedioate + CoA. Its pathway is amino-acid biosynthesis; L-lysine biosynthesis via DAP pathway; LL-2,6-diaminopimelate from (S)-tetrahydrodipicolinate (succinylase route): step 1/3. This chain is 2,3,4,5-tetrahydropyridine-2,6-dicarboxylate N-succinyltransferase, found in Ralstonia pickettii (strain 12J).